We begin with the raw amino-acid sequence, 457 residues long: G-protein coupled receptor 135 (457 aa).

The segment at 1–27 (MEEQARPPSRPAASATLPGSAHPGGAA) is disordered. Topologically, residues 1–64 (MEEQARPPSR…EAAGSRGPAP (64 aa)) are extracellular. An N-linked (GlcNAc...) asparagine glycan is attached at Asn-47. Residues 65–85 (LLWHGAAVAAQALVLLLIFLL) traverse the membrane as a helical segment. Topologically, residues 86–109 (SSLGNCAVMGVIVKHRQLRTVTNA) are cytoplasmic. The helical transmembrane segment at 110–130 (FILSLSLSDLLTALLCLPAAF) threads the bilayer. At 131 to 156 (LDLFAPPGDSGPWRSFCAASRFFSSC) the chain is on the extracellular side. The helical transmembrane segment at 157-177 (FGIVSTFSVALISLDRYCAIV) threads the bilayer. Residues 178 to 189 (RPPRDKLGRRRA) are Cytoplasmic-facing. Residues 190 to 210 (LQLLAGAWLAALGFSLPWELL) form a helical membrane-spanning segment. Residues 211–235 (RAPREPPTPQSFHRCLYRTSPDPAQ) are Extracellular-facing. The helical transmembrane segment at 236–256 (LGAAYSVGLVVACYLLPFLLM) threads the bilayer. Residues 257–295 (CFCRYHICKTVRLSDVRVRPMTTYARVLRFFSEVRTATT) lie on the Cytoplasmic side of the membrane. Residues 296-316 (VLIMIVFVICCWGPYCFLVLL) traverse the membrane as a helical segment. The Extracellular segment spans residues 317-329 (AATRQGQTTQAPS). Residues 330–350 (LLNVAAVWLTWANGAINPVIY) traverse the membrane as a helical segment. Over 351 to 457 (AIRNPNISMF…HKSETRDSSI (107 aa)) the chain is Cytoplasmic.

This sequence belongs to the G-protein coupled receptor 1 family. Interacts with MTNR1B. Interacts with ARRB1 and ARRB2 in a spontaneous and agonist-independent manner; leading to the internalization of GPR135 in the endosomal compartment.

The protein resides in the cell membrane. It is found in the endosome membrane. Orphan receptor. Has spontaneous activity for beta-arrestin recruitment. Shows a reciprocal regulatory interaction with the melatonin receptor MTNR1B most likely through receptor heteromerization. The protein is G-protein coupled receptor 135 (Gpr135) of Rattus norvegicus (Rat).